The following is a 297-amino-acid chain: Tyrosine recombinase XerD (297 aa).

Residues M1–Y86 enclose the Core-binding (CB) domain. One can recognise a Tyr recombinase domain in the interval R107–E291. Active-site residues include R147, K171, H243, R246, and H269. Residue Y278 is the O-(3'-phospho-DNA)-tyrosine intermediate of the active site.

Belongs to the 'phage' integrase family. XerD subfamily. As to quaternary structure, forms a cyclic heterotetrameric complex composed of two molecules of XerC and two molecules of XerD.

The protein localises to the cytoplasm. Functionally, site-specific tyrosine recombinase, which acts by catalyzing the cutting and rejoining of the recombining DNA molecules. The XerC-XerD complex is essential to convert dimers of the bacterial chromosome into monomers to permit their segregation at cell division. It also contributes to the segregational stability of plasmids. The sequence is that of Tyrosine recombinase XerD from Pasteurella multocida (strain Pm70).